Reading from the N-terminus, the 441-residue chain is Probable D-serine dehydratase (441 aa).

N6-(pyridoxal phosphate)lysine is present on Lys-117.

Belongs to the serine/threonine dehydratase family. DsdA subfamily. Pyridoxal 5'-phosphate is required as a cofactor.

It catalyses the reaction D-serine = pyruvate + NH4(+). This Acinetobacter baylyi (strain ATCC 33305 / BD413 / ADP1) protein is Probable D-serine dehydratase.